The chain runs to 602 residues: Cholinesterase (602 aa).

An N-terminal signal peptide occupies residues 1–28 (MQSRSTVIYIRFVLWFLLLWVLFEKSHT). N-linked (GlcNAc...) asparagine glycans are attached at residues N85 and N134. A substrate-binding site is contributed by 144–145 (GS). The active-site Acyl-ester intermediate is S226. The residue at position 226 (S226) is a Phosphoserine. N-linked (GlcNAc...) asparagine glycans are attached at residues N269 and N284. The active-site Charge relay system is E353. N369 carries N-linked (GlcNAc...) asparagine glycosylation. Catalysis depends on H466, which acts as the Charge relay system. N-linked (GlcNAc...) asparagine glycans are attached at residues N483, N509, N513, and N514.

Belongs to the type-B carboxylesterase/lipase family. Homotetramer; disulfide-linked. Dimer of dimers. Present in most cells except erythrocytes.

The protein resides in the secreted. It catalyses the reaction an acylcholine + H2O = a carboxylate + choline + H(+). In terms of biological role, esterase with broad substrate specificity. Contributes to the inactivation of the neurotransmitter acetylcholine. Can degrade neurotoxic organophosphate esters. This is Cholinesterase (BCHE) from Bos taurus (Bovine).